Reading from the N-terminus, the 267-residue chain is Orotidine 5'-phosphate decarboxylase (267 aa).

Residues Asp-37, 59-61 (KTH), 91-100 (DRKFADIGNT), Tyr-217, and Arg-235 each bind substrate. The active-site Proton donor is Lys-93.

This sequence belongs to the OMP decarboxylase family.

It catalyses the reaction orotidine 5'-phosphate + H(+) = UMP + CO2. Its pathway is pyrimidine metabolism; UMP biosynthesis via de novo pathway; UMP from orotate: step 2/2. This is Orotidine 5'-phosphate decarboxylase (URA3) from Eremothecium gossypii (strain ATCC 10895 / CBS 109.51 / FGSC 9923 / NRRL Y-1056) (Yeast).